Reading from the N-terminus, the 420-residue chain is Tyrosine--tRNA ligase (420 aa).

L-tyrosine is bound at residue Tyr36. A 'HIGH' region motif is present at residues 41 to 50; the sequence is PTADSLHIGH. Tyr170 and Gln174 together coordinate L-tyrosine. The 'KMSKS' region signature appears at 231 to 235; the sequence is KFGKS. Residue Lys234 participates in ATP binding. Positions 353-420 constitute an S4 RNA-binding domain; the sequence is TNIVEVLIET…KKKYFMVNYQ (68 aa).

It belongs to the class-I aminoacyl-tRNA synthetase family. TyrS type 1 subfamily. In terms of assembly, homodimer.

Its subcellular location is the cytoplasm. It carries out the reaction tRNA(Tyr) + L-tyrosine + ATP = L-tyrosyl-tRNA(Tyr) + AMP + diphosphate + H(+). Its function is as follows. Catalyzes the attachment of tyrosine to tRNA(Tyr) in a two-step reaction: tyrosine is first activated by ATP to form Tyr-AMP and then transferred to the acceptor end of tRNA(Tyr). In Staphylococcus aureus (strain COL), this protein is Tyrosine--tRNA ligase.